We begin with the raw amino-acid sequence, 831 residues long: Prolactin receptor (831 aa).

The N-terminal stretch at 1 to 23 (MKQNLISSVQIILLLPLTTVGLT) is a signal peptide. Residues 24 to 438 (SQSFPGKPKI…EIPNDFRVKD (415 aa)) lie on the Extracellular side of the membrane. 4 consecutive Fibronectin type-III domains span residues 30-128 (KPKI…VQPG), 129-232 (SPVN…SPPE), 233-331 (KPTI…VQPD), and 332-433 (PPAN…IPND). Cysteines 36 and 46 form a disulfide. N-linked (GlcNAc...) asparagine glycosylation occurs at Asn59. A disulfide bridge connects residues Cys75 and Cys86. N-linked (GlcNAc...) asparagine glycosylation is found at Asn91, Asn100, Asn112, Asn132, Asn262, Asn303, Asn315, and Asn335. Zn(2+) contacts are provided by Asp414 and His416. The short motif at 419-423 (WSEWS) is the WSXWS motif element. Residues 439–459 (MIVWIVLGVLSSLICLIMSWT) form a helical membrane-spanning segment. Residues 460-831 (MVLKGYRMIT…DPSSFMPSFK (372 aa)) lie on the Cytoplasmic side of the membrane. The Box 1 motif signature appears at 471-479 (ILPPVPGPK). Disordered stretches follow at residues 527-563 (HQLM…SPSL) and 776-831 (HTPT…PSFK). A compositionally biased stretch (basic and acidic residues) spans 545 to 554 (TLKETDRDSG). Over residues 777–803 (TPTSQEEPAKETSQNPQQGQVETNMSY) the composition is skewed to polar residues.

The protein belongs to the type I cytokine receptor family. Type 1 subfamily.

The protein resides in the membrane. In terms of biological role, this is a receptor for the anterior pituitary hormone prolactin. This Meleagris gallopavo (Wild turkey) protein is Prolactin receptor (PRLR).